The primary structure comprises 223 residues: UPF0441 protein YgiB (223 aa).

Over residues 178 to 195 the composition is skewed to low complexity; it reads TVPKTAMAPKPATTTTVT. The interval 178–223 is disordered; the sequence is TVPKTAMAPKPATTTTVTRGGFGESVAKQSTMQRSATGTSSRSMGG. The span at 204 to 223 shows a compositional bias: polar residues; sequence AKQSTMQRSATGTSSRSMGG.

This sequence belongs to the UPF0441 family.

The protein is UPF0441 protein YgiB of Shigella boydii serotype 18 (strain CDC 3083-94 / BS512).